The chain runs to 800 residues: Ent-copalyl diphosphate synthase 2 (800 aa).

The interval 52-80 is disordered; sequence QGQETRERRQLDDDEHARPPQGGDDDVAA. A compositionally biased stretch (basic and acidic residues) spans 55–69; it reads ETRERRQLDDDEHAR. Lys242 is a substrate binding site. Residues Asp374 and Asp376 each coordinate Mg(2+). Residues 374–377 carry the DXDD motif motif; that stretch reads DIDD. Position 461 (Lys461) interacts with substrate.

This sequence belongs to the terpene synthase family. The cofactor is Mg(2+).

The catalysed reaction is (2E,6E,10E)-geranylgeranyl diphosphate = ent-copalyl diphosphate. Its function is as follows. Catalyzes the conversion of geranylgeranyl diphosphate to the phytoalexin precursor ent-copalyl diphosphate. This is Ent-copalyl diphosphate synthase 2 (CPS2) from Oryza sativa subsp. indica (Rice).